The primary structure comprises 469 residues: Tubulin gamma-2 chain (469 aa).

Alanine 142–glycine 148 lines the GTP pocket.

The protein belongs to the tubulin family.

The protein localises to the cytoplasm. The protein resides in the cytoskeleton. It is found in the microtubule organizing center. Tubulin is the major constituent of microtubules. The gamma chain is found at microtubule organizing centers (MTOC) such as the spindle poles, suggesting that it is involved in the minus-end nucleation of microtubule assembly. This is Tubulin gamma-2 chain (TUBG2) from Zea mays (Maize).